The chain runs to 701 residues: Protein SOSEKI 1 (701 aa).

A DIX-like oligomerization domain region spans residues L8 to D101. 4 disordered regions span residues S238–G262, L300–E329, P366–K389, and I538–P575. Residues S306–S319 show a composition bias toward basic and acidic residues. The C2HC/C3H-type zinc-finger motif lies at I658 to A687. Positions 662, 665, 677, and 681 each coordinate Zn(2+).

Belongs to the SOSEKI family. As to quaternary structure, homodimer. Forms long polymer filaments with other SOKs proteins polymers crucial for polar localization and biological activity. The cofactor is Zn(2+).

The protein resides in the cell membrane. In terms of biological role, SOSEKI proteins locally interpret global polarity cues and can influence cell division orientation to coordinate cell polarization relative to body axes. The polypeptide is Protein SOSEKI 1 (Physcomitrium patens (Spreading-leaved earth moss)).